We begin with the raw amino-acid sequence, 496 residues long: Probable cytosol aminopeptidase (496 aa).

Mn(2+) contacts are provided by Lys262 and Asp267. Lys274 is a catalytic residue. 3 residues coordinate Mn(2+): Asp285, Asp344, and Glu346. Arg348 is a catalytic residue.

This sequence belongs to the peptidase M17 family. Mn(2+) serves as cofactor.

It is found in the cytoplasm. It carries out the reaction Release of an N-terminal amino acid, Xaa-|-Yaa-, in which Xaa is preferably Leu, but may be other amino acids including Pro although not Arg or Lys, and Yaa may be Pro. Amino acid amides and methyl esters are also readily hydrolyzed, but rates on arylamides are exceedingly low.. It catalyses the reaction Release of an N-terminal amino acid, preferentially leucine, but not glutamic or aspartic acids.. In terms of biological role, presumably involved in the processing and regular turnover of intracellular proteins. Catalyzes the removal of unsubstituted N-terminal amino acids from various peptides. This chain is Probable cytosol aminopeptidase, found in Rhizobium leguminosarum bv. trifolii (strain WSM2304).